The chain runs to 537 residues: CTP synthase (537 aa).

The interval 1-267 (MTKYIFVTGG…DQIVLDHFDV (267 aa)) is amidoligase domain. Residue Ser13 coordinates CTP. Ser13 serves as a coordination point for UTP. 14–19 (SIGKGI) serves as a coordination point for ATP. An L-glutamine-binding site is contributed by Tyr54. ATP is bound at residue Asp71. Mg(2+) contacts are provided by Asp71 and Glu141. Residues 148 to 150 (DIE), 188 to 193 (KTKPTQ), and Lys224 contribute to the CTP site. UTP contacts are provided by residues 188 to 193 (KTKPTQ) and Lys224. One can recognise a Glutamine amidotransferase type-1 domain in the interval 292–535 (KIALVGKYVA…IDAANQTGKV (244 aa)). Position 354 (Gly354) interacts with L-glutamine. Cys381 functions as the Nucleophile; for glutamine hydrolysis in the catalytic mechanism. L-glutamine is bound by residues 382–385 (LGMQ), Glu405, and Arg463. Active-site residues include His508 and Glu510.

Belongs to the CTP synthase family. As to quaternary structure, homotetramer.

It catalyses the reaction UTP + L-glutamine + ATP + H2O = CTP + L-glutamate + ADP + phosphate + 2 H(+). The catalysed reaction is L-glutamine + H2O = L-glutamate + NH4(+). It carries out the reaction UTP + NH4(+) + ATP = CTP + ADP + phosphate + 2 H(+). Its pathway is pyrimidine metabolism; CTP biosynthesis via de novo pathway; CTP from UDP: step 2/2. Allosterically activated by GTP, when glutamine is the substrate; GTP has no effect on the reaction when ammonia is the substrate. The allosteric effector GTP functions by stabilizing the protein conformation that binds the tetrahedral intermediate(s) formed during glutamine hydrolysis. Inhibited by the product CTP, via allosteric rather than competitive inhibition. Functionally, catalyzes the ATP-dependent amination of UTP to CTP with either L-glutamine or ammonia as the source of nitrogen. Regulates intracellular CTP levels through interactions with the four ribonucleotide triphosphates. The sequence is that of CTP synthase from Lactiplantibacillus plantarum (strain ATCC BAA-793 / NCIMB 8826 / WCFS1) (Lactobacillus plantarum).